The chain runs to 161 residues: Cytochrome c-type biogenesis protein CcmE (161 aa).

Residues 1 to 8 (MNPRRKKR) are Cytoplasmic-facing. Residues 9-29 (LGLILALFVGISATVGLMLYA) form a helical; Signal-anchor for type II membrane protein membrane-spanning segment. Residues 30 to 161 (LNQNMDLFYT…TEQQKQGTGQ (132 aa)) are Periplasmic-facing. Heme-binding residues include histidine 129 and tyrosine 133. A disordered region spans residues 142 to 161 (MKKTHEPLQYTEQQKQGTGQ). Polar residues predominate over residues 151-161 (YTEQQKQGTGQ).

It belongs to the CcmE/CycJ family.

Its subcellular location is the cell inner membrane. Its function is as follows. Heme chaperone required for the biogenesis of c-type cytochromes. Transiently binds heme delivered by CcmC and transfers the heme to apo-cytochromes in a process facilitated by CcmF and CcmH. This is Cytochrome c-type biogenesis protein CcmE from Aliivibrio fischeri (strain ATCC 700601 / ES114) (Vibrio fischeri).